We begin with the raw amino-acid sequence, 139 residues long: Large ribosomal subunit protein uL16 (139 aa).

The span at 1–21 (MLSPRKTKFRKQHRGRMRGKA) shows a compositional bias: basic residues. The disordered stretch occupies residues 1–23 (MLSPRKTKFRKQHRGRMRGKATR).

Belongs to the universal ribosomal protein uL16 family. In terms of assembly, part of the 50S ribosomal subunit.

Binds 23S rRNA and is also seen to make contacts with the A and possibly P site tRNAs. The chain is Large ribosomal subunit protein uL16 from Acaryochloris marina (strain MBIC 11017).